The primary structure comprises 711 residues: Constitutive ornithine decarboxylase (711 aa).

At Lys347 the chain carries N6-(pyridoxal phosphate)lysine.

This sequence belongs to the Orn/Lys/Arg decarboxylase class-I family. Pyridoxal 5'-phosphate serves as cofactor.

The enzyme catalyses L-ornithine + H(+) = putrescine + CO2. Its pathway is amine and polyamine biosynthesis; putrescine biosynthesis via L-ornithine pathway; putrescine from L-ornithine: step 1/1. This is Constitutive ornithine decarboxylase (speC) from Escherichia coli (strain K12).